The primary structure comprises 188 residues: UPF0314 protein Sala_3154 (188 aa).

3 helical membrane passes run 8 to 28 (TGWL…IFMG), 57 to 77 (WYSF…RWIM), and 143 to 163 (MRWW…LWTI).

It belongs to the UPF0314 family.

The protein resides in the cell membrane. The protein is UPF0314 protein Sala_3154 of Sphingopyxis alaskensis (strain DSM 13593 / LMG 18877 / RB2256) (Sphingomonas alaskensis).